Consider the following 219-residue polypeptide: Nuclear transcription factor Y subunit B-8 (219 aa).

The interval 1-26 (MPDSDNDSGGPSNYAGGELSSPREQD) is disordered. A DNA-binding region spans residues 29–35 (LPIANVS). The tract at residues 56–67 (VQECVSEFISFI) is subunit association domain (SAD). A compositionally biased stretch (low complexity) spans 119-134 (AAASTTGAGTSAASTT). Disordered regions lie at residues 119 to 142 (AAAS…QHTA) and 166 to 219 (GQPM…NRGA). Residues 190-206 (GGRGGFGHHPGGGGGGS) are compositionally biased toward gly residues.

It belongs to the NFYB/HAP3 subunit family. As to quaternary structure, heterotrimeric transcription factor composed of three components, NF-YA, NF-YB and NF-YC. NF-YB and NF-YC must interact and dimerize for NF-YA association and DNA binding. Interacts with NFYC2, NFYC4 and NFYC6.

It is found in the cytoplasm. Functionally, component of the NF-Y/HAP transcription factor complex. The chain is Nuclear transcription factor Y subunit B-8 from Oryza sativa subsp. japonica (Rice).